Consider the following 349-residue polypeptide: Probable G-protein coupled receptor 21 (349 aa).

Residues 1-32 (MNSTLDGNQSSHPFCLLAFGYLETVNFCLLEV) are Extracellular-facing. N-linked (GlcNAc...) asparagine glycans are attached at residues Asn-2 and Asn-8. The chain crosses the membrane as a helical span at residues 33–53 (LIIVFLTVLIISGNIIVIFVF). The Cytoplasmic portion of the chain corresponds to 54-75 (HCAPLLNHHTTSYFIQTMAYAD). A helical transmembrane segment spans residues 76–96 (LFVGVSCVVPSLSLLHHPLPV). Residues 97–104 (EESLTCQI) lie on the Extracellular side of the membrane. The helical transmembrane segment at 105-125 (FGFVVSVLKSVSMASLACISI) threads the bilayer. The Cytoplasmic portion of the chain corresponds to 126–147 (DRYIAITKPLTYNTLVTPWRLR). Residues 148–168 (LCIFLIWLYSTLVFLPSFFHW) form a helical membrane-spanning segment. Topologically, residues 169–191 (GKPGYHGDVFQWCAESWHTDSYF) are extracellular. Residues 192–212 (TLFIVMMLYAPAALIVCFTYF) traverse the membrane as a helical segment. At 213 to 252 (NIFRICQQHTKDISERQARFSSQSGETGEVQACPDKRYAM) the chain is on the cytoplasmic side. Residues 253–273 (VLFRITSVFYILWLPYIIYFL) form a helical membrane-spanning segment. Residues 274–283 (LESSTGHSNR) are Extracellular-facing. A helical transmembrane segment spans residues 284–304 (FASFLTTWLAISNSFCNCVIY). The Cytoplasmic segment spans residues 305–349 (SLSNSVFQRGLKRLSGAMCTSCASQTTANDPYTVRSKGPLNGCHI).

It belongs to the G-protein coupled receptor 1 family. Not detected in the brain regions thalamus, putamen, caudate, frontal cortex, pons, hypothalamus, hippocampus.

Its subcellular location is the cell membrane. Its function is as follows. Orphan receptor. The chain is Probable G-protein coupled receptor 21 (GPR21) from Homo sapiens (Human).